The chain runs to 291 residues: Undecaprenyl-diphosphatase (291 aa).

Helical transmembrane passes span 1 to 21 (MFII…LTEF), 48 to 68 (SAFT…AWVF), 102 to 122 (LHVL…DDFI), 126 to 146 (LFSV…MIIA), 162 to 182 (INYF…WPGF), 203 to 223 (SDFT…LSLL), 231 to 251 (IADI…GLIA), and 267 to 287 (FAIY…GFGI).

Belongs to the UppP family.

The protein localises to the cell membrane. The enzyme catalyses di-trans,octa-cis-undecaprenyl diphosphate + H2O = di-trans,octa-cis-undecaprenyl phosphate + phosphate + H(+). In terms of biological role, catalyzes the dephosphorylation of undecaprenyl diphosphate (UPP). Confers resistance to bacitracin. This is Undecaprenyl-diphosphatase from Staphylococcus aureus (strain Mu3 / ATCC 700698).